The primary structure comprises 293 residues: MADDAGAAGGPGGPGGPGLGGRGGFRGGFGSGLRGRGRGRGRGRGRGRGARGGKAEDKEWIPVTKLGRLVKDMKIKSLEEIYLFSLPIKESEIIDFFLGASLKDEVLKIMPVQKQTRAGQRTRFKAFVAIGDYNGHVGLGVKCSKEVATAIRGAIILAKLSIVPVRRGYWGNKIGKPHTVPCKVTGRCGSVLVRLIPAPRGTGIVSAPVPKKLLMMAGIDDCYTSARGCTATLGNFAKATFDAISKTYSYLTPDLWKETVFTKSPYQEFTDHLVKTHTRVSVQRTQAPAVATT.

Positions 1 to 55 are disordered; sequence MADDAGAAGGPGGPGGPGLGGRGGFRGGFGSGLRGRGRGRGRGRGRGRGARGGKA. Ala-2 bears the N-acetylalanine mark. The span at 7 to 34 shows a compositional bias: gly residues; that stretch reads AAGGPGGPGGPGLGGRGGFRGGFGSGLR. 14 repeat units span residues 9-11, 12-14, 15-17, 22-25, 26-29, 34-35, 36-37, 38-39, 40-41, 42-43, 44-45, 46-47, 48-49, and 51-52. Residues 9–17 are 3 X 3 AA tandem repeats of G-G-P; the sequence is GGPGGPGGP. The segment at 22–29 is 2 X 4 AA tandem repeats of R-G-G-F; it reads RGGFRGGF. The 9 X 2 AA tandem repeats of R-G stretch occupies residues 34–52; that stretch reads RGRGRGRGRGRGRGRGARG. The span at 35-51 shows a compositional bias: basic residues; it reads GRGRGRGRGRGRGRGAR. Glycyl lysine isopeptide (Lys-Gly) (interchain with G-Cter in ubiquitin) cross-links involve residues Lys-54 and Lys-58. Positions 102-165 constitute an S5 DRBM domain; the sequence is LKDEVLKIMP…ILAKLSIVPV (64 aa). Thr-252 is modified (phosphothreonine). The residue at position 263 (Lys-263) is an N6-acetyllysine. Ser-264 carries the phosphoserine modification. The residue at position 270 (Thr-270) is a Phosphothreonine. At Lys-275 the chain carries N6-acetyllysine; alternate. Lys-275 participates in a covalent cross-link: Glycyl lysine isopeptide (Lys-Gly) (interchain with G-Cter in SUMO1); alternate. A Glycyl lysine isopeptide (Lys-Gly) (interchain with G-Cter in SUMO2); alternate cross-link involves residue Lys-275. Lys-275 participates in a covalent cross-link: Glycyl lysine isopeptide (Lys-Gly) (interchain with G-Cter in ubiquitin); alternate. At Ser-281 the chain carries Phosphoserine.

This sequence belongs to the universal ribosomal protein uS5 family. Component of the small ribosomal subunit. Interacts with zinc finger protein ZNF277 (via zinc-finger domains); the interaction is direct; the interaction is extra-ribosomal. Interaction with ZNF277 competes with the binding of RPS2 to protein arginine methyltransferase PRMT3. Citrullinated by PADI4 in the Arg/Gly-rich region. Post-translationally, asymmetric arginine dimethylation by PRMT3 occurs at multiple sites in the Arg/Gly-rich region. In terms of processing, monoubiquitinated at Lys-54 and Lys-58 by RNF10 when a ribosome has stalled during translation, leading to its degradation by the proteasome. Deubiquitinated at Lys-54 and Lys-58 by USP10, preventing degradation by the proteasome and promoting 40S ribosome subunit recycling following ribosome dissociation.

Its subcellular location is the cytoplasm. It is found in the nucleus. The protein localises to the nucleolus. Component of the ribosome, a large ribonucleoprotein complex responsible for the synthesis of proteins in the cell. The small ribosomal subunit (SSU) binds messenger RNAs (mRNAs) and translates the encoded message by selecting cognate aminoacyl-transfer RNA (tRNA) molecules. The large subunit (LSU) contains the ribosomal catalytic site termed the peptidyl transferase center (PTC), which catalyzes the formation of peptide bonds, thereby polymerizing the amino acids delivered by tRNAs into a polypeptide chain. The nascent polypeptides leave the ribosome through a tunnel in the LSU and interact with protein factors that function in enzymatic processing, targeting, and the membrane insertion of nascent chains at the exit of the ribosomal tunnel. Plays a role in the assembly and function of the 40S ribosomal subunit. Mutations in this protein affects the control of translational fidelity. Involved in nucleolar processing of pre-18S ribosomal RNA and ribosome assembly. This Rattus norvegicus (Rat) protein is Small ribosomal subunit protein uS5 (Rps2).